The following is a 378-amino-acid chain: MIRQIILIVSLIGISNAAYQCKDNNGSNVDWFVFYKLPHLWNHPDNVPISNGTGFLYFDVNNKNWKLMPQGMDVENNAVYYTLQQYYNSNMNTTFSYMYNDEWPDSTIWSNSSGHAKGVTVFDQYTGFWMIHSIPKFPSKDMFRFPSNAHYYGQMGICISYNTVSLATIAQQLFYYNTFTYQFNLPQSFANQFPVLSQLKNKEYNKSPPLTSTKVLKSLGGQHFRHFAKTGEWGKDLYSDFVGPTLKSSIKVETWNHQSGDEYNLPSVCDPNHVQSTMSAKYIRLPYAIDYSSYEDHSKFVVAYSESSSKPPIPYVCIGDINRQSHQIHRGGGTMCIYDQETYFQFANIISETVPCTKATAEKATLTVLLIAIITFFK.

The N-terminal stretch at 1 to 17 (MIRQIILIVSLIGISNA) is a signal peptide. N-linked (GlcNAc...) asparagine glycosylation is found at Asn51, Asn92, and Asn111.

The protein belongs to the DNase II family.

Its function is as follows. Involved in apoptotic DNA degradation. The protein is Cell death-related nuclease 6 (crn-6) of Caenorhabditis elegans.